The following is a 311-amino-acid chain: MTPDLTQSAITPARLTHLQRLEAESIHILREVAAECERPVMLYSIGKDSAVMLHLAAKAFYPSKPPFPLLHIDTTWKFRDMYALRDRIGSEMGFDLLVHKNPDAQARGINPFDHGSAVHTDLWKTEGLKQALSKYGFDAAFGGARRDEEKSRAKERVFSFRSSEHRWDPKNQRPELWNLYNTRKHPGESLRVFPISNWTELDIWQYIHLENIPIVPLYFAAERPVVERDGALIMVDDDRFRLRDGEVPQMRSVRFRTLGCYPLTGAVESTAATLPQVIQEMLLATTSERQGRVIDHDQSASMEKKKQEGYF.

It belongs to the PAPS reductase family. CysD subfamily. As to quaternary structure, heterodimer composed of CysD, the smaller subunit, and CysN.

It catalyses the reaction sulfate + ATP + H(+) = adenosine 5'-phosphosulfate + diphosphate. It functions in the pathway sulfur metabolism; hydrogen sulfide biosynthesis; sulfite from sulfate: step 1/3. In terms of biological role, with CysN forms the ATP sulfurylase (ATPS) that catalyzes the adenylation of sulfate producing adenosine 5'-phosphosulfate (APS) and diphosphate, the first enzymatic step in sulfur assimilation pathway. APS synthesis involves the formation of a high-energy phosphoric-sulfuric acid anhydride bond driven by GTP hydrolysis by CysN coupled to ATP hydrolysis by CysD. The chain is Sulfate adenylyltransferase subunit 2 from Caulobacter vibrioides (strain ATCC 19089 / CIP 103742 / CB 15) (Caulobacter crescentus).